Here is a 629-residue protein sequence, read N- to C-terminus: Kelch-like protein 8 (629 aa).

Polar residues predominate over residues 1 to 10 (MASESTNGKQ). A disordered region spans residues 1-40 (MASESTNGKQARSHVTKGRRQYQHQHQQQQQQQQQVRSRS). N-acetylalanine is present on Ala-2. The segment covering 11-23 (ARSHVTKGRRQYQ) has biased composition (basic residues). Residues 24–35 (HQHQQQQQQQQQ) show a composition bias toward low complexity. A BTB domain is found at 76–143 (CDVTLKVGSK…VYSSRLTLTV (68 aa)). The BACK domain occupies 178-279 (CLAVRAFAES…LPVDFLMGVV (102 aa)). Kelch repeat units lie at residues 328–375 (VLFC…SVEG), 376–422 (KVYA…SLGG), 424–469 (IYAI…ALIN), 471–516 (VYAV…ELHG), 517–563 (CLYV…TVMG), and 565–610 (IFAV…VCDC).

Component of the BCR(KLHL8) E3 ubiquitin ligase complex, at least composed of CUL3, KLHL8 and RBX1. Interacts with RAPSN.

It participates in protein modification; protein ubiquitination. In terms of biological role, substrate-specific adapter of a BCR (BTB-CUL3-RBX1) E3 ubiquitin ligase complex required for The BCR(KLHL8) ubiquitin ligase complex mediates ubiquitination and degradation of RAPSN. This is Kelch-like protein 8 (Klhl8) from Mus musculus (Mouse).